Here is a 427-residue protein sequence, read N- to C-terminus: Arginine biosynthesis bifunctional protein ArgJ (427 aa).

Substrate is bound by residues threonine 174, lysine 200, threonine 211, glutamate 291, asparagine 422, and threonine 427. The active-site Nucleophile is the threonine 211.

This sequence belongs to the ArgJ family. In terms of assembly, heterotetramer of two alpha and two beta chains.

Its subcellular location is the cytoplasm. The catalysed reaction is N(2)-acetyl-L-ornithine + L-glutamate = N-acetyl-L-glutamate + L-ornithine. It catalyses the reaction L-glutamate + acetyl-CoA = N-acetyl-L-glutamate + CoA + H(+). Its pathway is amino-acid biosynthesis; L-arginine biosynthesis; L-ornithine and N-acetyl-L-glutamate from L-glutamate and N(2)-acetyl-L-ornithine (cyclic): step 1/1. It functions in the pathway amino-acid biosynthesis; L-arginine biosynthesis; N(2)-acetyl-L-ornithine from L-glutamate: step 1/4. Functionally, catalyzes two activities which are involved in the cyclic version of arginine biosynthesis: the synthesis of N-acetylglutamate from glutamate and acetyl-CoA as the acetyl donor, and of ornithine by transacetylation between N(2)-acetylornithine and glutamate. The sequence is that of Arginine biosynthesis bifunctional protein ArgJ from Prochlorococcus marinus (strain MIT 9313).